Here is a 224-residue protein sequence, read N- to C-terminus: Holliday junction branch migration complex subunit RuvA (224 aa).

The interval 1–64 (MIGRLSGVLV…EDLLQLYGFP (64 aa)) is domain I. A domain II region spans residues 65 to 143 (TLLEKEWHRL…EVMAMGGTLE (79 aa)). The tract at residues 144–171 (AALDGVIEDGMAASEGIEPPSAARPAVP) is flexible linker. Residues 172-224 (SAASDQAGALSALVNLGYGQGEAASAVATAAGEGAVGETDIIRAALRLLAPKG) form a domain III region.

This sequence belongs to the RuvA family. As to quaternary structure, homotetramer. Forms an RuvA(8)-RuvB(12)-Holliday junction (HJ) complex. HJ DNA is sandwiched between 2 RuvA tetramers; dsDNA enters through RuvA and exits via RuvB. An RuvB hexamer assembles on each DNA strand where it exits the tetramer. Each RuvB hexamer is contacted by two RuvA subunits (via domain III) on 2 adjacent RuvB subunits; this complex drives branch migration. In the full resolvosome a probable DNA-RuvA(4)-RuvB(12)-RuvC(2) complex forms which resolves the HJ.

The protein resides in the cytoplasm. Functionally, the RuvA-RuvB-RuvC complex processes Holliday junction (HJ) DNA during genetic recombination and DNA repair, while the RuvA-RuvB complex plays an important role in the rescue of blocked DNA replication forks via replication fork reversal (RFR). RuvA specifically binds to HJ cruciform DNA, conferring on it an open structure. The RuvB hexamer acts as an ATP-dependent pump, pulling dsDNA into and through the RuvAB complex. HJ branch migration allows RuvC to scan DNA until it finds its consensus sequence, where it cleaves and resolves the cruciform DNA. This Dinoroseobacter shibae (strain DSM 16493 / NCIMB 14021 / DFL 12) protein is Holliday junction branch migration complex subunit RuvA.